The following is a 429-amino-acid chain: Enolase (429 aa).

Gln163 contributes to the (2R)-2-phosphoglycerate binding site. The Proton donor role is filled by Glu205. The Mg(2+) site is built by Asp242, Glu287, and Asp314. Residues Lys339, Arg368, Ser369, and Lys390 each contribute to the (2R)-2-phosphoglycerate site. The Proton acceptor role is filled by Lys339.

This sequence belongs to the enolase family. Mg(2+) is required as a cofactor.

It localises to the cytoplasm. It is found in the secreted. The protein localises to the cell surface. It catalyses the reaction (2R)-2-phosphoglycerate = phosphoenolpyruvate + H2O. It functions in the pathway carbohydrate degradation; glycolysis; pyruvate from D-glyceraldehyde 3-phosphate: step 4/5. In terms of biological role, catalyzes the reversible conversion of 2-phosphoglycerate (2-PG) into phosphoenolpyruvate (PEP). It is essential for the degradation of carbohydrates via glycolysis. This Anaeromyxobacter sp. (strain Fw109-5) protein is Enolase.